Consider the following 407-residue polypeptide: Peptidase T (407 aa).

His82 lines the Zn(2+) pocket. Asp84 is an active-site residue. Asp143 contributes to the Zn(2+) binding site. The Proton acceptor role is filled by Glu177. 3 residues coordinate Zn(2+): Glu178, Asp200, and His382.

It belongs to the peptidase M20B family. It depends on Zn(2+) as a cofactor.

It localises to the cytoplasm. The catalysed reaction is Release of the N-terminal residue from a tripeptide.. Cleaves the N-terminal amino acid of tripeptides. This is Peptidase T from Streptococcus pyogenes serotype M1.